Consider the following 264-residue polypeptide: Merozoite surface protein 2 (264 aa).

Positions 1–20 are cleaved as a signal peptide; that stretch reads MKVIKTLSIINFFIFVTFNI. 2 N-linked (GlcNAc...) asparagine glycosylation sites follow: Asn-22 and Asn-36. Positions 44–190 are polymorphic region; sequence ANEGSNTNSV…PQTAENENPA (147 aa). The interval 46-227 is disordered; it reads EGSNTNSVGA…QKECTDGNKE (182 aa). 2 tandem repeats follow at residues 60 to 91 and 92 to 123. Residues 60-123 are 2 X 32 AA perfects repeats; it reads ADTIASGSQR…GESQTTTPTA (64 aa). The segment covering 70–81 has biased composition (low complexity); it reads STNSASTSTTNN. Positions 82–101 are enriched in polar residues; that stretch reads GESQTTTPTAADTIASGSQR. Residues 102–145 are compositionally biased toward low complexity; sequence STNSASTSTTNNGESQTTTPTAADTPTATESISPSPPITTTESS. Over residues 154-166 the composition is skewed to basic and acidic residues; sequence TDGKGEESEKQNE. N-linked (GlcNAc...) asparagine glycosylation is present at Asn-213. Basic and acidic residues predominate over residues 217–226; sequence SQKECTDGNK. The cysteines at positions 221 and 229 are disulfide-linked. The N-linked (GlcNAc...) asparagine glycan is linked to Asn-238. The GPI-anchor amidated asparagine moiety is linked to residue Asn-238. Positions 239-264 are cleaved as a propeptide — removed in mature form; the sequence is SSNIASINKFVVLISATLVLSFAIFI.

It localises to the cell membrane. May play a role in the merozoite attachment to the erythrocyte. This chain is Merozoite surface protein 2, found in Plasmodium falciparum (isolate FC27 / Papua New Guinea).